A 53-amino-acid polypeptide reads, in one-letter code: Small ribosomal subunit protein uS14 (53 aa).

4 residues coordinate Zn(2+): cysteine 17, cysteine 20, cysteine 36, and cysteine 39.

It belongs to the universal ribosomal protein uS14 family. Zinc-binding uS14 subfamily. In terms of assembly, part of the 30S ribosomal subunit. Requires Zn(2+) as cofactor.

Its function is as follows. Binds 16S rRNA, required for the assembly of 30S particles. The protein is Small ribosomal subunit protein uS14 of Methanococcus maripaludis (strain DSM 14266 / JCM 13030 / NBRC 101832 / S2 / LL).